The chain runs to 488 residues: MNVLNEKSLTVRGKDRYKSGVMSYKKMGYWEPDYTPKDTDIICLFRVTPQDGVDPIEAAAAVAGESSTATWTVVWTDRLTAAEKYRAKCYRVDPVPGAEGQYFAYIAYDLDLFEPGSISNLTASVIGNVFGFKPLKALRLEDMRLPVAYVKTFKGPPTGIVVERERLDKFGRPLLGATVKPKLGLSGRNYGRVVYEALKGGLDFTKDDENINSQPFMHWRERFLYCMEAVNRAQAATGEIKGSYLNVTAATMEDMYERAEFAKELGSVVVMIDLVIGYTAIQSMSNWARKNDMILHLHRAGHSTYTRQRNHGVSFRVISKWMRLAGVDHIHAGTVVGKLEGDPLTTRGYYDICREEHNPMQLEHGIFFDQNWASLNKMMPVASGGIHAGQMHQLIQHLGEDVVLQFGGGTIGHPMGIQAGATANRVALEAMILARNEGRDYVSEGPDILAKAAASCTPLKQALEVWKDVTFNYQSTDAPDYVTTPAVA.

The substrate site is built by Asn128 and Thr178. The Proton acceptor role is filled by Lys180. Lys182 provides a ligand contact to substrate. Residues Lys206, Asp208, and Glu209 each coordinate Mg(2+). Lys206 carries the N6-carboxylysine modification. Catalysis depends on His298, which acts as the Proton acceptor. Substrate contacts are provided by Arg299, His331, and Ser383.

Belongs to the RuBisCO large chain family. Type I subfamily. As to quaternary structure, heterohexadecamer of 8 large chains and 8 small chains. Mg(2+) is required as a cofactor.

The enzyme catalyses 2 (2R)-3-phosphoglycerate + 2 H(+) = D-ribulose 1,5-bisphosphate + CO2 + H2O. The catalysed reaction is D-ribulose 1,5-bisphosphate + O2 = 2-phosphoglycolate + (2R)-3-phosphoglycerate + 2 H(+). In terms of biological role, ruBisCO catalyzes two reactions: the carboxylation of D-ribulose 1,5-bisphosphate, the primary event in carbon dioxide fixation, as well as the oxidative fragmentation of the pentose substrate. Both reactions occur simultaneously and in competition at the same active site. The polypeptide is Ribulose bisphosphate carboxylase large chain 2 (Nitrobacter hamburgensis (strain DSM 10229 / NCIMB 13809 / X14)).